We begin with the raw amino-acid sequence, 292 residues long: Acetyl-coenzyme A carboxylase carboxyl transferase subunit beta (292 aa).

Residues 29–292 (LWSKCPECGQ…HGCLQGSAAV (264 aa)) form the CoA carboxyltransferase N-terminal domain. Residues cysteine 33, cysteine 36, cysteine 52, and cysteine 55 each coordinate Zn(2+). The segment at 33-55 (CPECGQVVYRKDLLANASVCSNC) adopts a C4-type zinc-finger fold.

This sequence belongs to the AccD/PCCB family. In terms of assembly, acetyl-CoA carboxylase is a heterohexamer composed of biotin carboxyl carrier protein (AccB), biotin carboxylase (AccC) and two subunits each of ACCase subunit alpha (AccA) and ACCase subunit beta (AccD). Zn(2+) serves as cofactor.

The protein localises to the cytoplasm. It carries out the reaction N(6)-carboxybiotinyl-L-lysyl-[protein] + acetyl-CoA = N(6)-biotinyl-L-lysyl-[protein] + malonyl-CoA. The protein operates within lipid metabolism; malonyl-CoA biosynthesis; malonyl-CoA from acetyl-CoA: step 1/1. In terms of biological role, component of the acetyl coenzyme A carboxylase (ACC) complex. Biotin carboxylase (BC) catalyzes the carboxylation of biotin on its carrier protein (BCCP) and then the CO(2) group is transferred by the transcarboxylase to acetyl-CoA to form malonyl-CoA. The protein is Acetyl-coenzyme A carboxylase carboxyl transferase subunit beta of Synechococcus sp. (strain WH7803).